We begin with the raw amino-acid sequence, 258 residues long: Undecaprenyl-diphosphatase (258 aa).

The next 8 helical transmembrane spans lie at Ala-14 to Leu-34, Gln-39 to Phe-59, Gly-79 to Phe-99, Val-106 to Leu-126, Val-136 to Pro-156, Ala-176 to Leu-196, Ala-209 to Met-229, and Phe-237 to Met-257.

This sequence belongs to the UppP family.

It localises to the cell membrane. The catalysed reaction is di-trans,octa-cis-undecaprenyl diphosphate + H2O = di-trans,octa-cis-undecaprenyl phosphate + phosphate + H(+). Its function is as follows. Catalyzes the dephosphorylation of undecaprenyl diphosphate (UPP). Confers resistance to bacitracin. In Elusimicrobium minutum (strain Pei191), this protein is Undecaprenyl-diphosphatase.